The following is a 407-amino-acid chain: S-adenosylmethionine synthase (407 aa).

His21 is an ATP binding site. Mg(2+) is bound at residue Asp23. Glu49 is a K(+) binding site. L-methionine-binding residues include Glu62 and Gln105. The segment at 105–115 (QSQEIGAGVDA) is flexible loop. ATP-binding positions include 179–181 (DGK), Asp259, 265–266 (RK), Ala282, and Lys286. Asp259 is a binding site for L-methionine. Lys290 lines the L-methionine pocket.

It belongs to the AdoMet synthase family. In terms of assembly, homotetramer; dimer of dimers. Requires Mg(2+) as cofactor. K(+) is required as a cofactor.

The protein localises to the cytoplasm. It carries out the reaction L-methionine + ATP + H2O = S-adenosyl-L-methionine + phosphate + diphosphate. It functions in the pathway amino-acid biosynthesis; S-adenosyl-L-methionine biosynthesis; S-adenosyl-L-methionine from L-methionine: step 1/1. Catalyzes the formation of S-adenosylmethionine (AdoMet) from methionine and ATP. The overall synthetic reaction is composed of two sequential steps, AdoMet formation and the subsequent tripolyphosphate hydrolysis which occurs prior to release of AdoMet from the enzyme. This Corynebacterium aurimucosum (strain ATCC 700975 / DSM 44827 / CIP 107346 / CN-1) (Corynebacterium nigricans) protein is S-adenosylmethionine synthase.